The sequence spans 383 residues: RNA-binding motif, single-stranded-interacting protein 2 (383 aa).

Met1 is modified (N-acetylmethionine). A disordered region spans residues 28–56; that stretch reads QMAPPSPRNSTPNSSGGGGGGSGGNDQLS. Over residues 42–51 the composition is skewed to gly residues; sequence SGGGGGGSGG. RRM domains follow at residues 58–131 and 137–222; these read TNLY…MAKQ and TNLY…FADG. Residue Ser108 is modified to Phosphoserine. A Phosphoserine modification is found at Ser287. The interval 352-383 is disordered; sequence SSVSAEESNGQQNQLAVEPPSDHGVYPFQFSK.

The protein resides in the nucleus. The sequence is that of RNA-binding motif, single-stranded-interacting protein 2 (Rbms2) from Mus musculus (Mouse).